The primary structure comprises 238 residues: Ribosomal RNA small subunit methyltransferase G (238 aa).

Residues Gly-78, Phe-83, 129 to 130 (AE), and Arg-148 contribute to the S-adenosyl-L-methionine site. A disordered region spans residues 216-238 (EKKKETPKKYPRKAGTPAKNPIK).

It belongs to the methyltransferase superfamily. RNA methyltransferase RsmG family.

Its subcellular location is the cytoplasm. Its function is as follows. Specifically methylates the N7 position of a guanine in 16S rRNA. The polypeptide is Ribosomal RNA small subunit methyltransferase G (Lactococcus lactis subsp. lactis (strain IL1403) (Streptococcus lactis)).